The sequence spans 661 residues: COBRA-like protein 7 (661 aa).

An N-terminal signal peptide occupies residues 1–26 (MDSAPNFIPRLLLLSLLIVSIPLTSS). A disordered region spans residues 26-45 (SQSDANTTNPSPSPPSDSDL). Residues Asn31, Asn64, Asn122, Asn170, Asn314, Asn327, Asn356, Asn369, Asn398, Asn410, Asn430, Asn472, Asn551, and Asn561 are each glycosylated (N-linked (GlcNAc...) asparagine). Ser637 is lipidated: GPI-anchor amidated serine. The propeptide at 638-661 (SQHRKHISVFLLALPVLALLILRA) is removed in mature form.

The protein belongs to the COBRA family. In terms of tissue distribution, expressed in roots, stems, leaves, flowers and siliques.

It localises to the cell membrane. The chain is COBRA-like protein 7 (COBL7) from Arabidopsis thaliana (Mouse-ear cress).